Consider the following 363-residue polypeptide: MLKTTPLNAAHRAMNAKMVDFGGWDMPLHYGSQLDEHHSVRRDAGMFDVSHMLTVDIHGENVRQFLRGLVANNVDKLTLPGKALYTCMLTPTGGIIDDLIIYFLSESWFRLVVNAGTADKDIDWITGQSRQLAPALTITPRRDLAMIAVQGPNARTKVWNVIPDSQAISENLKPFQSVMLGDYFIARTGYTGEDGFEITLPAGQAADFWQKLHAAGVAPAGLGARDTLRLEAGMNLYGQDMDETVNPLESGLAWTVDLKSERDFTGKQTLLETPVNRQLVGLVLLDKGVLRNHQKVITRQEGEAGEGEITSGGFSPTLNQSIALARIPAGIAAGEQVHVVVRDKQLAAKVVKYPFVRNGQALV.

Belongs to the GcvT family. In terms of assembly, the glycine cleavage system is composed of four proteins: P, T, L and H.

The enzyme catalyses N(6)-[(R)-S(8)-aminomethyldihydrolipoyl]-L-lysyl-[protein] + (6S)-5,6,7,8-tetrahydrofolate = N(6)-[(R)-dihydrolipoyl]-L-lysyl-[protein] + (6R)-5,10-methylene-5,6,7,8-tetrahydrofolate + NH4(+). Its function is as follows. The glycine cleavage system catalyzes the degradation of glycine. The protein is Aminomethyltransferase of Nitrosomonas europaea (strain ATCC 19718 / CIP 103999 / KCTC 2705 / NBRC 14298).